The sequence spans 334 residues: IRTLDDGGFYMANRISFPTLQNLVSHYMMDADGLAQRLSRPCSRANIPITSGLSYKDEWEIDRTTIQLQRKLGQGNFGEVWAGVWNGTTAVAVKTLKPDTMEVKDFVQEAQVMKKIHHPNLLQLYAVCTIGEPIYIVTELMKYGSMLEYLKHGEGKNITLHQMVDMSAQIASGMTYLEAHSYIHRDLAARNILVGEGNVCKVADFGLARVIKEDIYNPREGTKFPIKWTAPEAALYNRFTIKSDVWSFGVLISEIVTHGRMPYPGMTNRQVLEAVDRGYRMPCPEGCPDPLYKIMLSCWKHEPDDRPTFESLKNLLEDYYVSAAEGSYREPAPR.

An SH2 domain is found at 1–42; sequence IRTLDDGGFYMANRISFPTLQNLVSHYMMDADGLAQRLSRPC. One can recognise a Protein kinase domain in the interval 66 to 321; it reads IQLQRKLGQG…LKNLLEDYYV (256 aa). Residues 72 to 80 and K94 each bind ATP; that span reads LGQGNFGEV. D186 functions as the Proton acceptor in the catalytic mechanism.

The protein belongs to the protein kinase superfamily. Tyr protein kinase family.

The protein localises to the cytoplasm. The catalysed reaction is L-tyrosyl-[protein] + ATP = O-phospho-L-tyrosyl-[protein] + ADP + H(+). The polypeptide is Tyrosine-protein kinase SRK3 (SRK3) (Spongilla lacustris (Freshwater sponge)).